A 553-amino-acid chain; its full sequence is Urocanate hydratase (553 aa).

Residues 51–52 (GG), glutamine 129, 175–177 (GMG), glutamate 195, arginine 200, 241–242 (NA), 262–266 (QTSAH), 272–273 (YL), and tyrosine 321 contribute to the NAD(+) site. The active site involves cysteine 409. Position 491 (glycine 491) interacts with NAD(+).

The protein belongs to the urocanase family. The cofactor is NAD(+).

The protein resides in the cytoplasm. It carries out the reaction 4-imidazolone-5-propanoate = trans-urocanate + H2O. The protein operates within amino-acid degradation; L-histidine degradation into L-glutamate; N-formimidoyl-L-glutamate from L-histidine: step 2/3. In terms of biological role, catalyzes the conversion of urocanate to 4-imidazolone-5-propionate. This is Urocanate hydratase from Sphingopyxis alaskensis (strain DSM 13593 / LMG 18877 / RB2256) (Sphingomonas alaskensis).